The sequence spans 524 residues: Coatomer subunit delta-1 (524 aa).

A disordered region spans residues 215-244 (MDMDSFASKPKGGRPSAAATAPGKGLGMKL). The 242-residue stretch at 283 to 524 (SDPVTVTIEE…RLVAANYQVV (242 aa)) folds into the MHD domain.

Belongs to the adaptor complexes medium subunit family. Delta-COP subfamily. As to quaternary structure, oligomeric complex that consists of at least the alpha, beta, beta', gamma, delta, epsilon and zeta subunits.

It localises to the cytoplasm. The protein localises to the golgi apparatus membrane. Its subcellular location is the cytoplasmic vesicle. It is found in the COPI-coated vesicle membrane. Its function is as follows. The coatomer is a cytosolic protein complex that binds to dilysine motifs and reversibly associates with Golgi non-clathrin-coated vesicles, which further mediate biosynthetic protein transport from the ER, via the Golgi up to the trans Golgi network. Coatomer complex is required for budding from Golgi membranes, and is essential for the retrograde Golgi-to-ER transport of dilysine-tagged proteins. The sequence is that of Coatomer subunit delta-1 from Oryza sativa subsp. japonica (Rice).